Here is a 318-residue protein sequence, read N- to C-terminus: Aspartate carbamoyltransferase catalytic subunit (318 aa).

Residues Arg-57 and Thr-58 each contribute to the carbamoyl phosphate site. Lys-85 is an L-aspartate binding site. Carbamoyl phosphate-binding residues include Arg-107, His-141, and Gln-144. L-aspartate contacts are provided by Arg-174 and Arg-228. Residues Gly-269 and Pro-270 each coordinate carbamoyl phosphate.

This sequence belongs to the aspartate/ornithine carbamoyltransferase superfamily. ATCase family. Heterododecamer (2C3:3R2) of six catalytic PyrB chains organized as two trimers (C3), and six regulatory PyrI chains organized as three dimers (R2).

The catalysed reaction is carbamoyl phosphate + L-aspartate = N-carbamoyl-L-aspartate + phosphate + H(+). The protein operates within pyrimidine metabolism; UMP biosynthesis via de novo pathway; (S)-dihydroorotate from bicarbonate: step 2/3. Catalyzes the condensation of carbamoyl phosphate and aspartate to form carbamoyl aspartate and inorganic phosphate, the committed step in the de novo pyrimidine nucleotide biosynthesis pathway. The chain is Aspartate carbamoyltransferase catalytic subunit from Mycolicibacterium smegmatis (strain ATCC 700084 / mc(2)155) (Mycobacterium smegmatis).